Here is a 306-residue protein sequence, read N- to C-terminus: Plant-type L-asparaginase (306 aa).

Residue threonine 176 is the Nucleophile of the active site. Residues arginine 203–aspartate 206 and threonine 225–glycine 228 contribute to the substrate site.

The protein belongs to the Ntn-hydrolase family. As to quaternary structure, heterotetramer of two alpha and two beta chains arranged as a dimer of alpha/beta heterodimers. The uncleaved protein forms homodimers. Autocleaved. Generates the alpha and beta subunits. The N-terminal residue of the beta subunit is thought to be responsible for the nucleophile hydrolase activity. Predominantly produced in the uncleaved form when gene expression is induced at 37 degrees Celsius with 0.5 mM IPTG. When produced at 42 degrees Celsius without adding IPTG, approximately 90% of the protein is found in the cleaved form, while the remaining 10% is observed as uncleaved precursor. Undergoes complete auto-cleavage within 24 hours at 37 degrees Celsius.

The catalysed reaction is L-asparagine + H2O = L-aspartate + NH4(+). Undergoes auto-cleavage in a temperature-dependent and glycine-independent manner. Metal ions and EDTA do not have any significant effect on enzyme activity, indicating that activity is metal-independent. Functionally, catalyzes the hydrolysis of L-asparagine into L-aspartate and ammonia. Also displays D-asparaginase activity, which is about 10% of the L-asparaginase activity. Does not exhibit glutaminase activity. The protein is Plant-type L-asparaginase of Thermococcus kodakarensis (strain ATCC BAA-918 / JCM 12380 / KOD1) (Pyrococcus kodakaraensis (strain KOD1)).